The following is a 225-amino-acid chain: UPF0758 protein NMCC_1157 (225 aa).

Residues V102 to M224 form the MPN domain. 3 residues coordinate Zn(2+): H173, H175, and D186. The short motif at H173 to D186 is the JAMM motif element.

The protein belongs to the UPF0758 family.

This chain is UPF0758 protein NMCC_1157, found in Neisseria meningitidis serogroup C (strain 053442).